Reading from the N-terminus, the 209-residue chain is tRNA (guanine-N(7)-)-methyltransferase (209 aa).

Residues Glu40, Glu65, and Asp114 each contribute to the S-adenosyl-L-methionine site. Residue Asp114 is part of the active site. Residues Asp150 and 188–191 (TAFE) each bind substrate.

This sequence belongs to the class I-like SAM-binding methyltransferase superfamily. TrmB family.

It catalyses the reaction guanosine(46) in tRNA + S-adenosyl-L-methionine = N(7)-methylguanosine(46) in tRNA + S-adenosyl-L-homocysteine. The protein operates within tRNA modification; N(7)-methylguanine-tRNA biosynthesis. Functionally, catalyzes the formation of N(7)-methylguanine at position 46 (m7G46) in tRNA. The chain is tRNA (guanine-N(7)-)-methyltransferase from Bdellovibrio bacteriovorus (strain ATCC 15356 / DSM 50701 / NCIMB 9529 / HD100).